A 527-amino-acid chain; its full sequence is Catalase (527 aa).

Positions 1 to 22 are enriched in basic and acidic residues; the sequence is MADNRDPASDQMKHWKEQRAAQ. Residues 1–42 form a disordered region; the sequence is MADNRDPASDQMKHWKEQRAAQKPDVLTTGGGNPVGDKLNSL. Blocked amino end (Ala); alternate is present on Ala2. The residue at position 2 (Ala2) is an N-acetylalanine; alternate. Ser9 is modified (phosphoserine). An N6-succinyllysine modification is found at Lys13. Active-site residues include His75 and Asn148. NADP(+)-binding residues include His194, Phe198, Ser201, Arg203, Asn213, and Tyr215. Residue Lys221 is modified to N6-succinyllysine. The residue at position 233 (Lys233) is an N6-acetyllysine. NADP(+) is bound by residues Lys237, Trp303, and His305. Tyr358 serves as a coordination point for heme. Phosphoserine is present on residues Ser417 and Ser434. 3 residues coordinate NADP(+): Gln442, Thr445, and Phe446. An N6-acetyllysine; alternate mark is found at Lys449 and Lys480. An N6-succinyllysine; alternate mark is found at Lys449 and Lys480. Lys499 carries the post-translational modification N6-acetyllysine. The residue at position 511 (Thr511) is a Phosphothreonine. Ser517 carries the phosphoserine modification. A Microbody targeting signal; atypical motif is present at residues 524–527; it reads KANL.

This sequence belongs to the catalase family. Homotetramer. Interacts (via microbody targeting signal) with PEX5, monomeric form interacts with PEX5, leading to its translocation into peroxisomes. Heme is required as a cofactor. The cofactor is NADP(+).

Its subcellular location is the peroxisome matrix. The catalysed reaction is 2 H2O2 = O2 + 2 H2O. Functionally, catalyzes the degradation of hydrogen peroxide (H(2)O(2)) generated by peroxisomal oxidases to water and oxygen, thereby protecting cells from the toxic effects of hydrogen peroxide. Promotes growth of cells including T-cells, B-cells, myeloid leukemia cells, melanoma cells, mastocytoma cells and normal and transformed fibroblast cells. The polypeptide is Catalase (CAT) (Bos taurus (Bovine)).